The sequence spans 310 residues: MGKGSMTAHATPNEPDYPPPPGGPPPPADIGRLLLRCHDRPGIIAAVSTFLARAGANIISLDQHSTAPEGGTFLQRAIFHLPGLTAAVDELQRDFGSTVADKFGIDYRFAEAAKPKRVAIMASTEDHCLLDLLWRNRRGELEMSVVMVIANHPDLAAHVRPFGVPFIHIPATRDTRTEAEQRQLQLLSGNVDLVVLARYMQILSPGFLEAIGCPLINIHHSFLPAFTGAAPYQRARERGVKLIGATAHYVTEVLDEGPIIEQDVVRVDHTHTVDDLVRVGADVERAVLSRAVLWHCQDRVIVHHNQTIVF.

The segment at 1-30 (MGKGSMTAHATPNEPDYPPPPGGPPPPADI) is disordered. A compositionally biased stretch (pro residues) spans 15–28 (PDYPPPPGGPPPPA). In terms of domain architecture, ACT spans 32 to 108 (RLLLRCHDRP…VADKFGIDYR (77 aa)). Residue D255 is part of the active site.

It belongs to the PurU family.

The catalysed reaction is (6R)-10-formyltetrahydrofolate + H2O = (6S)-5,6,7,8-tetrahydrofolate + formate + H(+). Its pathway is purine metabolism; IMP biosynthesis via de novo pathway; formate from 10-formyl-5,6,7,8-tetrahydrofolate: step 1/1. Functionally, catalyzes the hydrolysis of 10-formyltetrahydrofolate (formyl-FH4) to formate and tetrahydrofolate (FH4). This chain is Formyltetrahydrofolate deformylase, found in Mycobacterium bovis (strain ATCC BAA-935 / AF2122/97).